The chain runs to 732 residues: TIR domain-containing adapter molecule 1 (732 aa).

Residues Met-1 to Ser-153 form a TRIF-NTD region. Residues Glu-84 to Asp-91 carry the TRAF6-binding motif. The interval Cys-144–His-191 is disordered. Residues His-159–Gln-178 show a composition bias toward polar residues. Positions Leu-206–Ser-209 match the pLxIS motif motif. Ser-209 is modified (phosphoserine). Lys-228 is covalently cross-linked (Glycyl lysine isopeptide (Lys-Gly) (interchain with G-Cter in ubiquitin)). 2 short sequence motifs (TRAF6-binding) span residues Gln-247 to Trp-254 and His-296 to Thr-306. Residues Ser-305–Pro-331 show a composition bias toward polar residues. Residues Ser-305–Ser-389 form a disordered region. Positions Ser-345–Pro-359 are enriched in low complexity. Residues Lys-395–Lys-534 form the TIR domain. Residues Trp-514–Glu-713 are sufficient to induce apoptosis. 2 disordered regions span residues Thr-603–Pro-679 and Met-696–Glu-732. Pro residues-rich tracts occupy residues Pro-604 to Ser-615 and Pro-625 to Ser-657. A compositionally biased stretch (low complexity) spans Ser-658–Ala-671.

In terms of assembly, homodimer. Found in a multi-helicase-TICAM1 complex at least composed of DHX36, DDX1, DDX21 and TICAM1; this complex exists in resting cells with or without poly(I:C) RNA ligand stimulation. Interacts (via TIR domain) with DDX21 (via C-terminus). Interacts (via TIR domain) with DHX36 (via C-terminus). Interacts with AZI2 and IRF7. Interacts (when phosphorylated) with IRF3; following activation and phosphorylation on the pLxIS motif by TBK1, recruits IRF3. Interacts with TICAM2 in TLR4 recruitment. Interaction with PIAS4 inhibits the TICAM1-induced NF-kappa-B, IRF and IFNB1 activation. Interacts with IKBKB and IKBKE. Interaction with SARM1 blocks TICAM1-dependent transcription factor activation. Interacts with TRAF3. Interacts with TRAFD1. Interacts with UBQLN1 (via UBA domain). Interacts with TBK1, TRAF6 and RIPK1 and these interactions are enhanced in the presence of WDFY1. Interacts (via the TIR domain) with TLR3 in response to poly(I:C) and this interaction is enhanced in the presence of WDFY1. Interacts with TLR4 in response to poly(I:C) in a WDFY1-dependent manner. Interacts with WDFY1 in response to poly(I:C). Interacts with TRIM56. Interacts (via the TIR domain) with TLR5. Interacts with TRIM8. Interacts with TAX1BP1 and TRIM32; these interactions target TICAM1 to TAX1BP1-mediated selective autophagic degradation. Interacts with DDX50. Post-translationally, phosphorylated by TBK1. Following activation, phosphorylated by TBK1 at Ser-209 in the pLxIS motif. The phosphorylated pLxIS motif constitutes an IRF3-binding motif, leading to recruitment of the transcription factor IRF3 to induce type-I interferons and other cytokines. Polyubiquitinated at Lys-228 by TRIM38 with 'Lys-48'-linked chains, leading to proteasomal degradation. Polyubiquitinated with 'Lys-6'- and 'Lys-33'-linked chains in a TRIM8-dependent manner; ubiquitination disrupts the interaction with TBK1 and subsequent interferon production.

The protein localises to the cytoplasm. It localises to the cytosol. Its subcellular location is the cytoplasmic vesicle. It is found in the autophagosome. The protein resides in the mitochondrion. Functionally, involved in innate immunity against invading pathogens. Adapter used by TLR3, TLR4 (through TICAM2) and TLR5 to mediate NF-kappa-B and interferon-regulatory factor (IRF) activation, and to induce apoptosis. Ligand binding to these receptors results in TRIF recruitment through its TIR domain. Distinct protein-interaction motifs allow recruitment of the effector proteins TBK1, TRAF6 and RIPK1, which in turn, lead to the activation of transcription factors IRF3 and IRF7, NF-kappa-B and FADD respectively. Phosphorylation by TBK1 on the pLxIS motif leads to recruitment and subsequent activation of the transcription factor IRF3 to induce expression of type I interferon and exert a potent immunity against invading pathogens. Component of a multi-helicase-TICAM1 complex that acts as a cytoplasmic sensor of viral double-stranded RNA (dsRNA) and plays a role in the activation of a cascade of antiviral responses including the induction of pro-inflammatory cytokines. This chain is TIR domain-containing adapter molecule 1 (Ticam1), found in Mus musculus (Mouse).